The sequence spans 29 residues: Cycloviolacin-O15 (29 aa).

The segment at residues 1 to 29 (GLVPCGETCFTGKCYTPGCSCSYPICKKN) is a cross-link (cyclopeptide (Gly-Asn)). Disulfide bonds link Cys5–Cys19, Cys9–Cys21, and Cys14–Cys26.

In terms of processing, this is a cyclic peptide.

In terms of biological role, probably participates in a plant defense mechanism. Has hemolytic activity. This chain is Cycloviolacin-O15, found in Viola odorata (Sweet violet).